We begin with the raw amino-acid sequence, 277 residues long: Myelin proteolipid protein (277 aa).

Residues 2–10 (GLLECCARC) are Cytoplasmic-facing. 3 S-palmitoyl cysteine lipidation sites follow: cysteine 6, cysteine 7, and cysteine 10. Residues 11–36 (LIGAPFASLVATGLCFFGVALFCGCG) traverse the membrane as a helical segment. Topologically, residues 37–59 (HEALTGTEQLIETYFSKNYQDYE) are extracellular. The helical transmembrane segment at 60 to 88 (FLIDVIHGFQYFIYGTAAFFFLYGALLLA) threads the bilayer. Topologically, residues 89–151 (EGFYTTGAVR…LGKWLGHPDK (63 aa)) are cytoplasmic. 3 S-palmitoyl cysteine lipidation sites follow: cysteine 109, cysteine 139, and cysteine 141. The chain crosses the membrane as a helical span at residues 152-178 (FVGITYVLTIIWLLVFACSAVPVYIYF). The Extracellular portion of the chain corresponds to 179–238 (NTWTTCQSIGNPTKTSASIGTLCADARMYGILPWNAFPGKVCGSNLLSICKTSEFQMTFH). Intrachain disulfides connect cysteine 184-cysteine 228 and cysteine 201-cysteine 220. The O-palmitoyl threonine moiety is linked to residue threonine 199. The chain crosses the membrane as a helical span at residues 239 to 268 (LFIAAFVGAAATLVSLVTFIIATTYNFAVL). Over 269-277 (RLMGRGTKF) the chain is Cytoplasmic.

This sequence belongs to the myelin proteolipid protein family.

The protein resides in the cell membrane. Functionally, this is the major myelin protein from the central nervous system. It plays an important role in the formation or maintenance of the multilamellar structure of myelin. This chain is Myelin proteolipid protein (PLP1), found in Taeniopygia guttata (Zebra finch).